A 544-amino-acid chain; its full sequence is Chaperonin GroEL (544 aa).

Residues 30–33, lysine 51, 87–91, glycine 415, 481–483, and aspartate 497 each bind ATP; these read TLGP, DGTTT, and DAL.

Belongs to the chaperonin (HSP60) family. As to quaternary structure, forms a cylinder of 14 subunits composed of two heptameric rings stacked back-to-back. Interacts with the co-chaperonin GroES.

The protein resides in the cytoplasm. It catalyses the reaction ATP + H2O + a folded polypeptide = ADP + phosphate + an unfolded polypeptide.. Its function is as follows. Together with its co-chaperonin GroES, plays an essential role in assisting protein folding. The GroEL-GroES system forms a nano-cage that allows encapsulation of the non-native substrate proteins and provides a physical environment optimized to promote and accelerate protein folding. The protein is Chaperonin GroEL of Chlamydia trachomatis serovar L2 (strain ATCC VR-902B / DSM 19102 / 434/Bu).